The primary structure comprises 587 residues: Kelch-like protein 3 (587 aa).

The disordered stretch occupies residues 1–24; the sequence is MEGESVKPSPQPTAQAEDEEKNRR. In terms of domain architecture, BTB spans 50–117; that stretch reads CDVMIVAEDV…IYTAEIEVTE (68 aa). The BACK domain occupies 152-254; that stretch reads CLGIRAFADV…PRDYLVQTVE (103 aa). The residue at position 295 (Thr295) is a Phosphothreonine. Kelch repeat units lie at residues 302 to 347, 348 to 394, 396 to 441, 442 to 490, 491 to 537, and 539 to 585; these read VMIV…FMAG, HVYA…VLND, LYAV…VVEG, KLYA…VLSG, QLYA…AVNG, and LYVV…VIHK. Phosphothreonine is present on Thr375. Phosphoserine occurs at positions 376 and 433.

Belongs to the KLHL3 family. Homodimer. Component of the BCR(KLHL3) E3 ubiquitin ligase complex, at least composed of CUL3 and KLHL3 and RBX1. Interacts with CLDN8. Phosphorylation at Ser-433 by PKA or PKC decreases the interaction with WNK1 and WNK4, leading to inhibit their degradation by the BCR(KLHL3) complex. Phosphorylated at Ser-433 by PKC in response to angiotensin II signaling, decreasing ability to promote degradation of WNK1 and WNK4, leading to activation of Na-Cl cotransporter SLC12A3/NCC. Phosphorylation at Ser-433 is increased by insulin. Dephosphorylated at Ser-433 by calcineurin PPP3CA, promoting degradation of WNK1 and WNK4. In terms of tissue distribution, present at high level in brain and kidney (at protein level). Weakly expressed in other tissues. In kidney, predominantly localizes to the distal convoluted tubule (DCT) and collecting duct, with apical localization in the DCT (at protein level).

Its subcellular location is the cytoplasm. The protein localises to the cytosol. It localises to the cytoskeleton. Its pathway is protein modification; protein ubiquitination. Its function is as follows. Substrate-specific adapter of a BCR (BTB-CUL3-RBX1) E3 ubiquitin ligase complex that acts as a regulator of ion transport in the distal nephron. The BCR(KLHL3) complex acts by mediating ubiquitination and degradation of WNK1 and WNK4, two activators of Na-Cl cotransporter SLC12A3/NCC in distal convoluted tubule cells of kidney, thereby regulating NaCl reabsorption. The BCR(KLHL3) complex also mediates ubiquitination of CLDN8, a tight-junction protein required for paracellular chloride transport in the kidney, leading to its degradation. The sequence is that of Kelch-like protein 3 from Mus musculus (Mouse).